The sequence spans 115 residues: MLMHSILIILVIILTTYFTRIWPFMVFNAKNPPNDFVRYLGRALSCSVIGMLVIYCFKDIHILKPPYGINEITAFLSVILLHRIFKVFVLSITLPTILYMVLVQSHALEKAFFNP.

A run of 3 helical transmembrane segments spans residues 6–26 (ILII…PFMV), 43–63 (ALSC…IHIL), and 84–104 (IFKV…VLVQ).

The protein belongs to the AzlD/HI_1737/HP1330 family.

The protein resides in the cell membrane. This is an uncharacterized protein from Helicobacter pylori (strain ATCC 700392 / 26695) (Campylobacter pylori).